The chain runs to 415 residues: Putative competence-damage inducible protein (415 aa).

This sequence belongs to the CinA family.

The sequence is that of Putative competence-damage inducible protein from Listeria innocua serovar 6a (strain ATCC BAA-680 / CLIP 11262).